A 212-amino-acid polypeptide reads, in one-letter code: Peptide methionine sulfoxide reductase MsrA (212 aa).

Cysteine 52 is a catalytic residue.

This sequence belongs to the MsrA Met sulfoxide reductase family.

The enzyme catalyses L-methionyl-[protein] + [thioredoxin]-disulfide + H2O = L-methionyl-(S)-S-oxide-[protein] + [thioredoxin]-dithiol. The catalysed reaction is [thioredoxin]-disulfide + L-methionine + H2O = L-methionine (S)-S-oxide + [thioredoxin]-dithiol. Its function is as follows. Has an important function as a repair enzyme for proteins that have been inactivated by oxidation. Catalyzes the reversible oxidation-reduction of methionine sulfoxide in proteins to methionine. This is Peptide methionine sulfoxide reductase MsrA from Escherichia coli O6:K15:H31 (strain 536 / UPEC).